Reading from the N-terminus, the 132-residue chain is Large ribosomal subunit protein bL19 (132 aa).

This sequence belongs to the bacterial ribosomal protein bL19 family.

This protein is located at the 30S-50S ribosomal subunit interface and may play a role in the structure and function of the aminoacyl-tRNA binding site. This is Large ribosomal subunit protein bL19 from Maricaulis maris (strain MCS10) (Caulobacter maris).